Reading from the N-terminus, the 196-residue chain is Probable GTP-binding protein EngB (196 aa).

The EngB-type G domain occupies 21-195 (DVSEICLIGR…YELIDKLLGS (175 aa)). Residues 29 to 36 (GRSNVGKS), 56 to 60 (GKTRL), 75 to 78 (DAPG), 142 to 145 (TKLD), and 174 to 176 (ISN) contribute to the GTP site. 2 residues coordinate Mg(2+): S36 and T58.

The protein belongs to the TRAFAC class TrmE-Era-EngA-EngB-Septin-like GTPase superfamily. EngB GTPase family. Requires Mg(2+) as cofactor.

Its function is as follows. Necessary for normal cell division and for the maintenance of normal septation. In Mycoplasma mycoides subsp. mycoides SC (strain CCUG 32753 / NCTC 10114 / PG1), this protein is Probable GTP-binding protein EngB.